A 201-amino-acid chain; its full sequence is Small ribosomal subunit protein uS4c (201 aa).

The segment at 15–43 (LGALPGLTSKRPTPGSDLRNQSRSGKRSQ) is disordered. Residues 89 to 149 (MRLDNILFRL…DEQKSRALIQ (61 aa)) enclose the S4 RNA-binding domain.

It belongs to the universal ribosomal protein uS4 family. Part of the 30S ribosomal subunit. Contacts protein S5. The interaction surface between S4 and S5 is involved in control of translational fidelity.

The protein resides in the plastid. It localises to the chloroplast. In terms of biological role, one of the primary rRNA binding proteins, it binds directly to 16S rRNA where it nucleates assembly of the body of the 30S subunit. Functionally, with S5 and S12 plays an important role in translational accuracy. The protein is Small ribosomal subunit protein uS4c (rps4) of Nandina domestica (Heavenly bamboo).